Reading from the N-terminus, the 397-residue chain is 2,3-bisphosphoglycerate-independent phosphoglycerate mutase (397 aa).

The protein belongs to the BPG-independent phosphoglycerate mutase family. A-PGAM subfamily.

The enzyme catalyses (2R)-2-phosphoglycerate = (2R)-3-phosphoglycerate. It participates in carbohydrate degradation; glycolysis; pyruvate from D-glyceraldehyde 3-phosphate: step 3/5. In terms of biological role, catalyzes the interconversion of 2-phosphoglycerate and 3-phosphoglycerate. The protein is 2,3-bisphosphoglycerate-independent phosphoglycerate mutase (apgM) of Methanosarcina mazei (strain ATCC BAA-159 / DSM 3647 / Goe1 / Go1 / JCM 11833 / OCM 88) (Methanosarcina frisia).